Reading from the N-terminus, the 596-residue chain is ATP-dependent lipid A-core flippase (596 aa).

The next 6 membrane-spanning stretches (helical) occupy residues 34–54 (VWVLVAGVLAMAAVAATEAGI), 80–100 (AAVVGLALARAIAQYASGYLL), 138–158 (AVVFEVNQVLSVLMGVMITLV), 164–184 (VVFLLGYLFYLNWRLTLIVAI), 263–283 (QPLTQFLASIALAVVLTIAVV), and 292–312 (VGGFVAFVTAMLLIISPLKHL). In terms of domain architecture, ABC transmembrane type-1 spans 38 to 321 (VAGVLAMAAV…LMDVNQPLQR (284 aa)). One can recognise an ABC transporter domain in the interval 353–589 (IEFSHVSFSY…GGLYAHLHRI (237 aa)). 389-396 (GPSGSGKT) is an ATP binding site.

Belongs to the ABC transporter superfamily. Lipid exporter (TC 3.A.1.106) family. As to quaternary structure, homodimer.

The protein localises to the cell inner membrane. The enzyme catalyses ATP + H2O + lipid A-core oligosaccharideSide 1 = ADP + phosphate + lipid A-core oligosaccharideSide 2.. In terms of biological role, involved in lipopolysaccharide (LPS) biosynthesis. Translocates lipid A-core from the inner to the outer leaflet of the inner membrane. Transmembrane domains (TMD) form a pore in the inner membrane and the ATP-binding domain (NBD) is responsible for energy generation. The sequence is that of ATP-dependent lipid A-core flippase from Burkholderia thailandensis (strain ATCC 700388 / DSM 13276 / CCUG 48851 / CIP 106301 / E264).